The following is a 777-amino-acid chain: Santalene and bergamotene synthase, chloroplastic (777 aa).

A chloroplast-targeting transit peptide spans 1–36; that stretch reads MIVGYRSTIITLSHPKLGNGKTISSNAIFQRSCRVR. Residues Asp530 and Asp534 each coordinate Mg(2+). Positions 530-534 match the DDXXD motif motif; the sequence is DDQFD.

It belongs to the terpene synthase family. Tpse subfamily. Requires Mg(2+) as cofactor. The cofactor is Mn(2+).

The protein resides in the plastid. Its subcellular location is the chloroplast. It carries out the reaction (2Z,6Z)-farnesyl diphosphate = (+)-alpha-santalene + diphosphate. The catalysed reaction is (2Z,6Z)-farnesyl diphosphate = (+)-endo-beta-bergamotene + diphosphate. It catalyses the reaction (2Z,6Z)-farnesyl diphosphate = (1S,5S,6S)-alpha-bergamotene + diphosphate. (2Z,6Z)-farnesyl diphosphate cyclizing enzyme. Produces (+)-alpha-santalene, (+)-endo-beta-bergamotene, (-)-endo-alpha-bergamotene, and at lower amounts, (-)exo-alpha-bergamotene and (+)-epi-beta-santalene. Not able to use geranyl diphosphate, E,E-farnesyl diphosphate or E,E,E-geranylgeranyl diphosphate as substrates, but able to use Neryl diphosphate to make the monoterpene terpineol. This Solanum habrochaites (Wild tomato) protein is Santalene and bergamotene synthase, chloroplastic (SBS).